The following is a 268-amino-acid chain: Zinc finger protein SNAI2 (268 aa).

Positions 1 to 20 are SNAG domain; that stretch reads MPRSFLVKKHFNASKKPNYS. Residues 80–117 form a disordered region; the sequence is PASLGRVSPPPPSDTSSKDHSGSESPISDEEERLQSKL. 4 consecutive C2H2-type zinc fingers follow at residues 128 to 150, 159 to 181, 185 to 207, and 213 to 235; these read FQCNLCNKTYSTFSGLGKHKQLH, FSCKYCDKEYVSLGALKMHIRTH, CVCKICGKAFSRPWLLQGHIRTH, and FSCSHCSRAFADRSNLRAHLQTH. Residues 241 to 264 form a C2H2-type 5; atypical zinc finger; that stretch reads YQCKSCSKTFSRMSLLHKHEESGC.

Belongs to the snail C2H2-type zinc-finger protein family. Interacts (via SNAG domain) with LIMD1 (via LIM domains), WTIP (via LIM domains) and AJUBA (via LIM domains). Interacts (via zinc fingers) with KPNA2, KPNB1, and TNPO1. May interact (via zinc fingers) with IPO7. Post-translationally, phosphorylated by GSK3B. Once phosphorylated, it becomes a target for ubiquitination. In terms of processing, ubiquitinated by the SCF(FBXO11) complex; ubiquitination requires previous GSK3B-mediated SNAI2 phosphorylation.

The protein resides in the nucleus. Its subcellular location is the cytoplasm. In terms of biological role, transcriptional repressor that modulates both activator-dependent and basal transcription. Involved in the generation and migration of neural crest cells. Plays a role in mediating RAF1-induced transcriptional repression of the TJ protein, occludin (OCLN) and subsequent oncogenic transformation of epithelial cells. Represses BRCA2 expression by binding to its E2-box-containing silencer and recruiting CTBP1 and HDAC1 in breast cells. In epidermal keratinocytes, binds to the E-box in ITGA3 promoter and represses its transcription. Involved in the regulation of ITGB1 and ITGB4 expression and cell adhesion and proliferation in epidermal keratinocytes. Binds to E-box2 domain of BSG and activates its expression during TGFB1-induced epithelial-mesenchymal transition (EMT) in hepatocytes. Represses E-Cadherin/CDH1 transcription via E-box elements. Involved in osteoblast maturation. Binds to RUNX2 and SOC9 promoters and may act as a positive and negative transcription regulator, respectively, in osteoblasts. Binds to CXCL12 promoter via E-box regions in mesenchymal stem cells and osteoblasts. Plays an essential role in TWIST1-induced EMT and its ability to promote invasion and metastasis. The polypeptide is Zinc finger protein SNAI2 (SNAI2) (Bos taurus (Bovine)).